The following is a 416-amino-acid chain: Na(+)/H(+) antiporter NhaA (416 aa).

A run of 9 helical transmembrane segments spans residues 18–38 (VGGA…NSPW), 59–79 (LTLA…VAGL), 97–117 (ALPI…AAVI), 127–147 (GWAI…ALTG), 167–187 (LLAI…LWLL), 265–285 (GICV…ATVF), 297–317 (VMLG…WVAI), 333–353 (MFAL…VAEL), and 363–383 (LAKA…SALL). Residues 396–416 (ALELQPDEGDASDPSEGGSLR) are disordered.

It belongs to the NhaA Na(+)/H(+) (TC 2.A.33) antiporter family.

The protein resides in the cell membrane. It catalyses the reaction Na(+)(in) + 2 H(+)(out) = Na(+)(out) + 2 H(+)(in). Functionally, na(+)/H(+) antiporter that extrudes sodium in exchange for external protons. This chain is Na(+)/H(+) antiporter NhaA, found in Nocardia farcinica (strain IFM 10152).